The chain runs to 273 residues: Formamidopyrimidine-DNA glycosylase (273 aa).

Proline 2 functions as the Schiff-base intermediate with DNA in the catalytic mechanism. The active-site Proton donor is glutamate 3. The active-site Proton donor; for beta-elimination activity is lysine 59. Positions 93, 111, and 154 each coordinate DNA. The segment at 239-273 (KVYGRGGEPCKECGHTLVRIRLAGRSTVFCPCCQV) adopts an FPG-type zinc-finger fold. Arginine 263 acts as the Proton donor; for delta-elimination activity in catalysis.

It belongs to the FPG family. Monomer. Requires Zn(2+) as cofactor.

It carries out the reaction Hydrolysis of DNA containing ring-opened 7-methylguanine residues, releasing 2,6-diamino-4-hydroxy-5-(N-methyl)formamidopyrimidine.. It catalyses the reaction 2'-deoxyribonucleotide-(2'-deoxyribose 5'-phosphate)-2'-deoxyribonucleotide-DNA = a 3'-end 2'-deoxyribonucleotide-(2,3-dehydro-2,3-deoxyribose 5'-phosphate)-DNA + a 5'-end 5'-phospho-2'-deoxyribonucleoside-DNA + H(+). Involved in base excision repair of DNA damaged by oxidation or by mutagenic agents. Acts as a DNA glycosylase that recognizes and removes damaged bases. Has a preference for oxidized purines, such as 7,8-dihydro-8-oxoguanine (8-oxoG). Has AP (apurinic/apyrimidinic) lyase activity and introduces nicks in the DNA strand. Cleaves the DNA backbone by beta-delta elimination to generate a single-strand break at the site of the removed base with both 3'- and 5'-phosphates. This Desulfitobacterium hafniense (strain DSM 10664 / DCB-2) protein is Formamidopyrimidine-DNA glycosylase.